The sequence spans 264 residues: MHSAANAKQQKHFVLVHGGCLGAWIWYKLKPLLESAGHKVTAVDLSAAGINPRRLDEIHTFRDYSEPLMEVMASIPPDEKVVLLGHSFGGMSLGLAMETYPEKISVAVFMSAMMPDPNHSLTYPFEKYNEKCPADMMLDSQFSTYGNPENPGMSMILGPQFMALKMFQNCSVEDLELAKMLTRPGSLFFQDLAKAKKFSTERYGSVKRAYIFCNEDKSFPVEFQKWFVESVGADKVKEIKEADHMGMLSQPREVCKCLLDISDS.

The propeptide occupies 1–6 (MHSAAN). Positions 12–122 (HFVLVHGGCL…MMPDPNHSLT (111 aa)) constitute an AB hydrolase-1 domain. Active-site residues include Ser-87, Asp-216, and His-244. Ser-87 contacts 16-epivellosimine.

This sequence belongs to the AB hydrolase superfamily. Homodimer; homodimerizes in aqueous solutions at pH 7.0. As to expression, mainly expressed in roots and, to a lower level, in leaves.

The enzyme catalyses polyneuridine aldehyde + H2O = 16-epivellosimine + methanol + CO2. It participates in alkaloid biosynthesis; ajmaline biosynthesis. With respect to regulation, inhibited by DEPC and HgCl(2). Functionally, hydrolase involved in the biosynthesis of ajmaline-type monoterpenoid indole alkaloids (MIAs) natural products, important plant-derived pharmaceuticals used in the therapy of heart disorders. Catalyzes the hydrolysis of polyneuridine aldehyde into epi-vellosimine, precursor of vomilenine, an intermediate chemical in the biosynthesis of ajmaline. In Rauvolfia serpentina (Serpentine wood), this protein is Polyneuridine aldehyde esterase.